The following is a 951-amino-acid chain: Multiple C2 and transmembrane domain-containing protein 1 (951 aa).

Disordered stretches follow at residues 29–79 (LGVG…RWSG), 92–117 (SSSQ…AEQG), 129–198 (LPVA…QKSS), and 210–231 (LEPA…ALQK). Gly residues predominate over residues 31–43 (VGKGKGGGGGRAG). Residues 147-168 (PGGRSPDSAPSSSSASSSLSSS) show a composition bias toward low complexity. Residues 174 to 184 (RGDRVRDESTR) are compositionally biased toward basic and acidic residues. The span at 219–228 (PARGPAEPQA) shows a compositional bias: low complexity. 3 consecutive C2 domains span residues 240-358 (KIST…DVTL), 404-521 (QTQS…KLEL), and 555-676 (QKER…AYVL). Ca(2+) contacts are provided by D275, D281, D328, D330, D336, D438, D444, D491, D493, D499, D594, D600, D646, D648, and D654. 2 helical membrane passes run 763–783 (FVLF…LLLL) and 866–886 (PFLS…LYFI).

Belongs to the MCTP family. It depends on Ca(2+) as a cofactor.

It localises to the cytoplasmic vesicle. Its subcellular location is the secretory vesicle. The protein resides in the synaptic vesicle membrane. The protein localises to the recycling endosome. It is found in the endoplasmic reticulum membrane. Functionally, calcium sensor which is essential for the stabilization of normal baseline neurotransmitter release and for the induction and long-term maintenance of presynaptic homeostatic plasticity. This Mus musculus (Mouse) protein is Multiple C2 and transmembrane domain-containing protein 1.